The following is a 285-amino-acid chain: Sulfotransferase 2A2 (285 aa).

3'-phosphoadenylyl sulfate is bound by residues lysine 44, serine 45, glycine 46, threonine 47, asparagine 48, and tryptophan 49. Histidine 99 functions as the Proton acceptor in the catalytic mechanism. 7 residues coordinate 3'-phosphoadenylyl sulfate: arginine 121, serine 129, tyrosine 184, serine 218, arginine 247, lysine 248, and glycine 249.

This sequence belongs to the sulfotransferase 1 family. In terms of tissue distribution, detected in liver.

It is found in the cytoplasm. The catalysed reaction is an alcohol + 3'-phosphoadenylyl sulfate = an alkyl sulfate + adenosine 3',5'-bisphosphate + H(+). Functionally, sulfotransferase that utilizes 3'-phospho-5'-adenylyl sulfate (PAPS) as sulfonate donor to catalyze the sulfate conjugation of a potential wide variety of acceptor molecules bearing a hydroxyl group. Sulfonation increases the water solubility of most compounds, and therefore their renal excretion, but it can also result in bioactivation to form active metabolites. The protein is Sulfotransferase 2A2 of Rattus norvegicus (Rat).